Reading from the N-terminus, the 147-residue chain is D-aminoacyl-tRNA deacylase (147 aa).

A Gly-cisPro motif, important for rejection of L-amino acids motif is present at residues 137–138 (GP).

It belongs to the DTD family. Homodimer.

Its subcellular location is the cytoplasm. The enzyme catalyses glycyl-tRNA(Ala) + H2O = tRNA(Ala) + glycine + H(+). The catalysed reaction is a D-aminoacyl-tRNA + H2O = a tRNA + a D-alpha-amino acid + H(+). In terms of biological role, an aminoacyl-tRNA editing enzyme that deacylates mischarged D-aminoacyl-tRNAs. Also deacylates mischarged glycyl-tRNA(Ala), protecting cells against glycine mischarging by AlaRS. Acts via tRNA-based rather than protein-based catalysis; rejects L-amino acids rather than detecting D-amino acids in the active site. By recycling D-aminoacyl-tRNA to D-amino acids and free tRNA molecules, this enzyme counteracts the toxicity associated with the formation of D-aminoacyl-tRNA entities in vivo and helps enforce protein L-homochirality. The polypeptide is D-aminoacyl-tRNA deacylase (Exiguobacterium sp. (strain ATCC BAA-1283 / AT1b)).